We begin with the raw amino-acid sequence, 512 residues long: MLLRLCIIATLLVSHCVAVSTSPATRDTNGEGLLVQTSSGPIQGFFNQTAPDVRQWLGVPFAEPPVGDLRFSSPVKKQPNGTVNAFALPSSCIQQTSNSSTIYTTYETGFLISGGDSEDCLYLSIWAPRIENIQSQQRPLPVLLYIPGGGFTSGGEASLYKIPDKWVQRTQSHIVVIMNYRVNVFGFPNAEGLSEPNVGLLDQRMAVEWVAANIANFGGDPARIALWGQSAGAASVTAYSYGYPEDPIVAALIADSGAPNIVDNEDYAHTNFTFLASLVGCDGLSSTEELSCMRNVSARKLQTALSTYSGSPSISFTPAVDNKTFFANWTERAITGKVAKIPLITGSNTNEGAGFVSFTPAGPSKSTLFEITESIIACPVAEEVKNRNLANLTTYRYQYAGNFTNISPLPWFGAYHSAELPILFGTHYEYGGPSTQYEWDVSYAMQALWLSFVEDPTRGPVRLAVGNVPANPTNESYFAWPAFEQGSDDLLVFAEGGKVMQLVGAGRIDDYC.

Positions 1–18 (MLLRLCIIATLLVSHCVA) are cleaved as a signal peptide. Residues Asn-47, Asn-80, and Asn-98 are each glycosylated (N-linked (GlcNAc...) asparagine). Residues Cys-92 and Cys-120 are joined by a disulfide bond. Ser-230 functions as the Acyl-ester intermediate in the catalytic mechanism. Asn-271 carries N-linked (GlcNAc...) asparagine glycosylation. A disulfide bridge links Cys-281 with Cys-292. Residues Asn-295, Asn-322, and Asn-328 are each glycosylated (N-linked (GlcNAc...) asparagine). The active-site Charge relay system is Glu-351. Asn-391 and Asn-402 each carry an N-linked (GlcNAc...) asparagine glycan. His-416 serves as the catalytic Charge relay system. Residue Asn-474 is glycosylated (N-linked (GlcNAc...) asparagine).

It belongs to the type-B carboxylesterase/lipase family.

The protein resides in the secreted. It carries out the reaction chlorogenate + H2O = L-quinate + (E)-caffeate + H(+). Extracellular chlorogenic acid esterase that releases caffeic acid from chlorogenic acid (CGA) contained in natural substrates such as apple marc and coffee pulp. Shows no activity towards 5-O-p-coumaroyl quinic acid, another quinic ester derivative, and rosmarinic acid, another caffeic ester derivative. This Aspergillus niger protein is Chlorogenic acid esterase.